The sequence spans 166 residues: Interferon gamma (166 aa).

The first 23 residues, 1–23 (MKYTSYILAFQLCIILGSSSCYS), serve as a signal peptide directing secretion. Position 24 is a pyrrolidone carboxylic acid (Gln-24). Residues Asn-39, Asn-44, and Asn-106 are each glycosylated (N-linked (GlcNAc...) asparagine).

The protein belongs to the type II (or gamma) interferon family. In terms of assembly, homodimer. As to expression, released primarily from activated T lymphocytes.

It localises to the secreted. Produced by lymphocytes activated by specific antigens or mitogens. IFN-gamma, in addition to having antiviral activity, has important immunoregulatory functions. It is a potent activator of macrophages, it has antiproliferative effects on transformed cells and it can potentiate the antiviral and antitumor effects of the type I interferons. In Marmota monax (Woodchuck), this protein is Interferon gamma (IFNG).